The primary structure comprises 157 residues: MSRRRGKVEPRKITPDPVYNDVQVAKFINCLMLSGEKSVAERLFYDALEIIQKKTGNDPYTTFREALENAKPQVEVKSRRVGGVTYQVPIEVRPERRLALGIRWLIRYSRDRNEKGMASKLAAEFIEAQKGTGSAIKKKEDIRKMAEANKAFSHYRW.

This sequence belongs to the universal ribosomal protein uS7 family. Part of the 30S ribosomal subunit. Contacts proteins S9 and S11.

In terms of biological role, one of the primary rRNA binding proteins, it binds directly to 16S rRNA where it nucleates assembly of the head domain of the 30S subunit. Is located at the subunit interface close to the decoding center, probably blocks exit of the E-site tRNA. The chain is Small ribosomal subunit protein uS7 from Leptospira borgpetersenii serovar Hardjo-bovis (strain JB197).